The chain runs to 496 residues: DEAD-box ATP-dependent RNA helicase 38 (496 aa).

A disordered region spans residues 1-91 (MADTVEKVPT…SGDTPYTSAS (91 aa)). Ala-2 carries the post-translational modification N-acetylalanine. The span at 7–25 (KVPTVVESSSSSTVEASNS) shows a compositional bias: low complexity. A compositionally biased stretch (basic and acidic residues) spans 27 to 40 (EKTEPTTEKKKWGD). The span at 41–51 (VEDDDDEEEAV) shows a compositional bias: acidic residues. A compositionally biased stretch (polar residues) spans 78–91 (KAVTSGDTPYTSAS). Positions 91–120 (SRFEDLNLSPELMKGLYVEMKFEKPSKIQA) match the Q motif motif. The 177-residue stretch at 125–301 (MIMTPPHKHL…ARTVKDPNQL (177 aa)) folds into the Helicase ATP-binding domain. ATP is bound at residue 138 to 145 (AHNGSGKT). A DEAD box motif is present at residues 245–248 (DEAD). The Helicase C-terminal domain maps to 329–483 (VIKDQIMELG…EIKSWNSEEE (155 aa)).

The protein belongs to the DEAD box helicase family. DDX19/DBP5 subfamily. Interacts with NUP214 (via N-terminus). In terms of tissue distribution, constitutively expressed.

It is found in the cytoplasm. Its subcellular location is the nucleus. It carries out the reaction ATP + H2O = ADP + phosphate + H(+). Its function is as follows. ATP-dependent RNA helicase essential for mRNA export from the nucleus. Plays an important role in the positive regulation of CBF/DREB transcription factors. The chain is DEAD-box ATP-dependent RNA helicase 38 (RH38) from Arabidopsis thaliana (Mouse-ear cress).